Here is a 132-residue protein sequence, read N- to C-terminus: Peptide methionine sulfoxide reductase MsrB (132 aa).

In terms of domain architecture, MsrB spans 8–130 (LDSWREELTE…NSASLKLVPR (123 aa)). Positions 47, 50, 96, and 99 each coordinate Zn(2+). C119 serves as the catalytic Nucleophile.

The protein belongs to the MsrB Met sulfoxide reductase family. It depends on Zn(2+) as a cofactor.

The enzyme catalyses L-methionyl-[protein] + [thioredoxin]-disulfide + H2O = L-methionyl-(R)-S-oxide-[protein] + [thioredoxin]-dithiol. This chain is Peptide methionine sulfoxide reductase MsrB, found in Pseudomonas aeruginosa (strain UCBPP-PA14).